A 389-amino-acid polypeptide reads, in one-letter code: Tryptophan 2,3-dioxygenase (389 aa).

Residues 60–64 (FIITH) and arginine 131 each bind substrate. Histidine 316 serves as a coordination point for heme. Threonine 331 contacts substrate.

It belongs to the tryptophan 2,3-dioxygenase family. As to quaternary structure, homotetramer. Dimer of dimers. Heme is required as a cofactor.

The enzyme catalyses L-tryptophan + O2 = N-formyl-L-kynurenine. It functions in the pathway amino-acid degradation; L-tryptophan degradation via kynurenine pathway; L-kynurenine from L-tryptophan: step 1/2. It participates in pigment biosynthesis; ommochrome biosynthesis. Heme-dependent dioxygenase that catalyzes the oxidative cleavage of the L-tryptophan (L-Trp) pyrrole ring and converts L-tryptophan to N-formyl-L-kynurenine. Catalyzes the oxidative cleavage of the indole moiety. In Mayetiola destructor (Hessian fly), this protein is Tryptophan 2,3-dioxygenase.